The primary structure comprises 249 residues: Probable transcriptional regulatory protein LIC_12886 (249 aa).

The protein belongs to the TACO1 family.

The protein resides in the cytoplasm. This chain is Probable transcriptional regulatory protein LIC_12886, found in Leptospira interrogans serogroup Icterohaemorrhagiae serovar copenhageni (strain Fiocruz L1-130).